The chain runs to 254 residues: MKILLSNDDGVGAKGIAVLYQALMQIAEVTLVAPDRNCSGASNSLTLLNPLRATKLENGFISVNGTPTDCVHLGVNQLVDEMPDLVVAGINHGANLGDDTLYSGTVAAATEGRHLGLPAIAVSLCSHHGEHFETAAAVTISIIKGLASHPLPKDQIININVPDIPLSELKGVQVTRLGARHKAETMTKQTDPWGRDIYWYGSLGTESDAGEGTDFHAINNGYASVTPLSVDMTANESIKAVGEWLADLEINRAG.

4 residues coordinate a divalent metal cation: Asp8, Asp9, Ser39, and Asn91.

It belongs to the SurE nucleotidase family. A divalent metal cation is required as a cofactor.

The protein localises to the cytoplasm. It catalyses the reaction a ribonucleoside 5'-phosphate + H2O = a ribonucleoside + phosphate. Functionally, nucleotidase that shows phosphatase activity on nucleoside 5'-monophosphates. The protein is 5'-nucleotidase SurE of Pseudoalteromonas translucida (strain TAC 125).